The sequence spans 325 residues: Lactonase drp35 (325 aa).

Residues E46, T108, G110, D128, T131, Y133, D136, N183, D234, and S235 each coordinate Ca(2+). D234 acts as the Proton donor in catalysis.

This sequence belongs to the SMP-30/CGR1 family. The cofactor is Ca(2+).

The protein resides in the cytoplasm. Functionally, exhibits lactonase activity. Acts in cells with perturbed membrane integrity and is possibly related to the membrane homeostasis. This Staphylococcus epidermidis (strain ATCC 35984 / DSM 28319 / BCRC 17069 / CCUG 31568 / BM 3577 / RP62A) protein is Lactonase drp35 (drp35).